The sequence spans 68 residues: MGMRMMFTVFLLVVLATTVVSFTSRRGPKSRRGEPVPTTVINYGECCKDPSCWVKVKDFQCPGASPPN.

The first 21 residues, Met-1–Ser-21, serve as a signal peptide directing secretion. Positions Phe-22 to Gly-44 are excised as a propeptide. Disulfide bonds link Cys-46-Cys-52 and Cys-47-Cys-61.

It belongs to the conotoxin A superfamily. In terms of tissue distribution, expressed by the venom duct.

The protein resides in the secreted. Functionally, does not show activity on all the human nAChR subtypes studied. This chain is Conotoxin G1.9, found in Conus geographus (Geography cone).